We begin with the raw amino-acid sequence, 367 residues long: Folliculin-like protein bhd1 (367 aa).

2 disordered regions span residues 41-75 and 92-115; these read RSIG…QSST and SKGP…SPIS. The segment covering 54-64 has biased composition (basic and acidic residues); that stretch reads EAFKNELDNRN. Composition is skewed to polar residues over residues 65–75 and 99–115; these read NADSQSLQSST and RVNS…SPIS. The region spanning 131-302 is the uDENN FLCN/SMCR8-type domain; sequence FSVPDVQPRL…SNIGTAPSYE (172 aa).

This sequence belongs to the folliculin family.

The protein localises to the nucleus. It is found in the cytoplasm. The polypeptide is Folliculin-like protein bhd1 (bhd1) (Schizosaccharomyces pombe (strain 972 / ATCC 24843) (Fission yeast)).